The primary structure comprises 1221 residues: 2-oxoglutarate dehydrogenase E1/E2 component (1221 aa).

Residues 2 to 40 (SSASTFGQNAWLVDEMFQQFQKDPKSVDKEWRELFEAQG) form a 2-oxoglutarate dehydrogenase E1, N-terminal part region. A disordered region spans residues 22–107 (QKDPKSVDKE…KLPEPGQTPI (86 aa)). A compositionally biased stretch (basic and acidic residues) spans 23–36 (KDPKSVDKEWRELF). The span at 41 to 52 (GPNTTPATTEAQ) shows a compositional bias: polar residues. Positions 41 to 89 (GPNTTPATTEAQPSAPKESAKPAPKAAPAAKAAPRVETKPADKTAPKAK) are linker. The span at 53–73 (PSAPKESAKPAPKAAPAAKAA) shows a compositional bias: low complexity. Over residues 74-90 (PRVETKPADKTAPKAKE) the composition is skewed to basic and acidic residues. The tract at residues 90 to 337 (ESSVPQQPKL…LRTMSRLLTD (248 aa)) is succinyltransferase E2. The Proton acceptor; for succinyltransferase activity role is filled by histidine 316. The interval 338 to 1221 (DSFWDEIFDA…KQLIDEAFEA (884 aa)) is 2-oxoglutarate dehydrogenase E1, C-terminal part. Thiamine diphosphate is bound at residue arginine 544. Positions 583 and 608 each coordinate 2-oxoglutarate. Positions 608, 610, 645, 646, 647, and 678 each coordinate thiamine diphosphate. Aspartate 645 contributes to the Mg(2+) binding site. The Mg(2+) site is built by asparagine 678 and isoleucine 680. A 2-oxoglutarate-binding site is contributed by histidine 1017. 5 residues coordinate acetyl-CoA: threonine 1035, arginine 1051, lysine 1087, serine 1090, and arginine 1144.

It in the N-terminal section; belongs to the alpha-ketoglutarate dehydrogenase family. The protein in the C-terminal section; belongs to the 2-oxoacid dehydrogenase family. Homodimer. Part of an unusual ODH/PDH supercomplex, consisting of AceE (E1), AceF (E2), and Lpd (E3) together with OdhA (E1+E2). Interacts with the FHA domain of unphosphorylated OdhI via its C-terminal dehydrogenase domain. The cofactor is Mg(2+). It depends on thiamine diphosphate as a cofactor.

It carries out the reaction N(6)-[(R)-lipoyl]-L-lysyl-[protein] + 2-oxoglutarate + H(+) = N(6)-[(R)-S(8)-succinyldihydrolipoyl]-L-lysyl-[protein] + CO2. The catalysed reaction is N(6)-[(R)-dihydrolipoyl]-L-lysyl-[protein] + succinyl-CoA = N(6)-[(R)-S(8)-succinyldihydrolipoyl]-L-lysyl-[protein] + CoA. Its pathway is carbohydrate metabolism; tricarboxylic acid cycle; succinyl-CoA from 2-oxoglutarate (dehydrogenase route): step 1/1. Inhibited by unphosphorylated OdhI, but not by phosphorylated OdhI. Functionally, catalyzes the E1 and E2 reactions as part of 2-oxoglutarate dehydrogenase (ODH) activity, to convert 2-oxoglutarate to succinyl-CoA and CO(2). OdhA has reductase activity with 2-oxoglutarate but does not react with pyruvate, and also displays transsuccinylase but no transacetylase activity. Since OdhA is not lipoylated, the succinyltransferase activity of its E2 domain is dependent on lipoyl residues of the acetyltransferase AceF. The sequence is that of 2-oxoglutarate dehydrogenase E1/E2 component from Corynebacterium glutamicum (strain ATCC 13032 / DSM 20300 / JCM 1318 / BCRC 11384 / CCUG 27702 / LMG 3730 / NBRC 12168 / NCIMB 10025 / NRRL B-2784 / 534).